Consider the following 163-residue polypeptide: Type-1 angiotensin II receptor-associated protein-like (163 aa).

At 1–28 the chain is on the extracellular side; sequence MELPAVNLKAIVFTHWLLTVFACMIDWL. A helical transmembrane segment spans residues 29–49; the sequence is PKAYGLANITILAMGVWAIAQ. Over 50 to 55 the chain is Cytoplasmic; the sequence is RDSIDA. The chain crosses the membrane as a helical span at residues 56–76; it reads IFMFLIGLLLTILTDILLFAL. The Extracellular portion of the chain corresponds to 77-95; that stretch reads YFTEAEKASESGPLRDLFR. A helical transmembrane segment spans residues 96 to 116; that stretch reads FSSGMGIFSLLLKPLSCFFMY. Residues 117-163 are Cytoplasmic-facing; the sequence is HMYRERGGEYFVNLGFITLSRDRSSYQSIEHMDPPADQDNKLPSRTY.

Its subcellular location is the membrane. Appears to be a negative regulator of angiotensin II type I receptor-mediated signaling. This Xenopus tropicalis (Western clawed frog) protein is Type-1 angiotensin II receptor-associated protein-like (agtrap).